A 123-amino-acid polypeptide reads, in one-letter code: Small ribosomal subunit protein uS12 (123 aa).

Position 89 is a 3-methylthioaspartic acid (D89).

Belongs to the universal ribosomal protein uS12 family. Part of the 30S ribosomal subunit. Contacts proteins S8 and S17. May interact with IF1 in the 30S initiation complex.

Its function is as follows. With S4 and S5 plays an important role in translational accuracy. In terms of biological role, interacts with and stabilizes bases of the 16S rRNA that are involved in tRNA selection in the A site and with the mRNA backbone. Located at the interface of the 30S and 50S subunits, it traverses the body of the 30S subunit contacting proteins on the other side and probably holding the rRNA structure together. The combined cluster of proteins S8, S12 and S17 appears to hold together the shoulder and platform of the 30S subunit. This chain is Small ribosomal subunit protein uS12, found in Sinorhizobium medicae (strain WSM419) (Ensifer medicae).